The chain runs to 440 residues: Protein dumpy-20 (440 aa).

Residues 96 to 119 (ILSDPSLHGSNSSSSTSDVGSSVD) form a disordered region. A compositionally biased stretch (low complexity) spans 98–119 (SDPSLHGSNSSSSTSDVGSSVD). 2 consecutive BED-type zinc fingers follow at residues 137–186 (PTEN…YQKV) and 350–399 (KTEH…YNDV). Zn(2+) is bound by residues Cys-156, Cys-159, His-174, His-179, Cys-369, Cys-372, His-387, and His-392.

Functionally, may be directly or indirectly involved in cuticle function. This is Protein dumpy-20 (dpy-20) from Caenorhabditis elegans.